Reading from the N-terminus, the 350-residue chain is Enoyl-[acyl-carrier-protein] reductase, mitochondrial (350 aa).

The N-terminal 12 residues, 1-12, are a transit peptide targeting the mitochondrion; sequence MWLGLRLFHRPF. Residue Tyr68 is the Proton donor of the active site. NADP(+)-binding positions include Asn141, 167 to 170, 190 to 192, 259 to 262, 284 to 286, and Lys345; these read NSGV, RDR, YGGM, and FWV.

It belongs to the zinc-containing alcohol dehydrogenase family. Quinone oxidoreductase subfamily. As to quaternary structure, homodimer. In terms of tissue distribution, expressed in the developing pronephros.

The protein resides in the mitochondrion. It catalyses the reaction a 2,3-saturated acyl-[ACP] + NADP(+) = a (2E)-enoyl-[ACP] + NADPH + H(+). In terms of biological role, catalyzes the NADPH-dependent reduction of trans-2-enoyl thioesters in mitochondrial fatty acid synthesis (fatty acid synthesis type II). Fatty acid chain elongation in mitochondria uses acyl carrier protein (ACP) as an acyl group carrier, but the enzyme accepts both ACP and CoA thioesters as substrates in vitro. May provide the octanoyl chain used for lipoic acid biosynthesis, regulating protein lipoylation and mitochondrial respiratory activity. Involved in iron homeostasis; affecting Fe-S cluster assembly and ceramide metabolism. Required for proper morphology and bioenergetic functions of mitochondria. Required for maintenance of neurons. Functions in pronephros development, regulating late differentiation of all pronephric tubule segments. The sequence is that of Enoyl-[acyl-carrier-protein] reductase, mitochondrial (mecr) from Xenopus tropicalis (Western clawed frog).